The following is a 290-amino-acid chain: Glycine--tRNA ligase alpha subunit (290 aa).

Belongs to the class-II aminoacyl-tRNA synthetase family. As to quaternary structure, tetramer of two alpha and two beta subunits.

It localises to the cytoplasm. It catalyses the reaction tRNA(Gly) + glycine + ATP = glycyl-tRNA(Gly) + AMP + diphosphate. This chain is Glycine--tRNA ligase alpha subunit, found in Syntrophotalea carbinolica (strain DSM 2380 / NBRC 103641 / GraBd1) (Pelobacter carbinolicus).